The primary structure comprises 142 residues: MPFGEYPYTIDDKGRVVMPPPFREFVEDGMILTRGMEGCLYVFPLASWRRVEEQLEGLPLTDAESRAFVRFFYSGANKARLDNQSRVSVPQTLRTFAGLDGDVIVAGAPGRLELWNPGRWEEAINAVQHTPPKPDLLANFVA.

SpoVT-AbrB domains lie at 5 to 47 and 76 to 119; these read EYPY…PLAS and ANKA…NPGR.

It belongs to the MraZ family. Forms oligomers.

Its subcellular location is the cytoplasm. The protein resides in the nucleoid. This chain is Transcriptional regulator MraZ, found in Deinococcus deserti (strain DSM 17065 / CIP 109153 / LMG 22923 / VCD115).